A 221-amino-acid polypeptide reads, in one-letter code: Putative adhesin P1-like protein MPN_131 (221 aa).

Over residues 13-36 the composition is skewed to low complexity; sequence RYGNNHRGSNSSTSGVTTQGQSQN. 2 disordered regions span residues 13–51 and 90–183; these read RYGNNHRGSNSSTSGVTTQGQSQNASSNEPAPTFSNVGV and GWRN…TPSG. Residues 37–48 show a composition bias toward polar residues; that stretch reads ASSNEPAPTFSN. The segment covering 130-139 has biased composition (basic and acidic residues); sequence LKQDKADKSG. Composition is skewed to polar residues over residues 149–160 and 174–183; these read SGDNLTNYTNLP and HSPTRTTPSG.

It belongs to the adhesin P1 family.

This Mycoplasma pneumoniae (strain ATCC 29342 / M129 / Subtype 1) (Mycoplasmoides pneumoniae) protein is Putative adhesin P1-like protein MPN_131.